We begin with the raw amino-acid sequence, 300 residues long: Geranylgeranyl pyrophosphate synthase (300 aa).

M1 is subject to N-acetylmethionine. Residues K25, R28, and H57 each contribute to the isopentenyl diphosphate site. Mg(2+) contacts are provided by D64 and D68. R73 contributes to the dimethylallyl diphosphate binding site. R74 provides a ligand contact to isopentenyl diphosphate. Dimethylallyl diphosphate contacts are provided by K151, T152, Q185, K202, and K212.

This sequence belongs to the FPP/GGPP synthase family. In terms of assembly, homohexamer; trimer of homodimers. Mg(2+) serves as cofactor.

The protein resides in the cytoplasm. The protein localises to the perinuclear region. It localises to the myofibril. Its subcellular location is the sarcomere. It is found in the z line. It catalyses the reaction isopentenyl diphosphate + dimethylallyl diphosphate = (2E)-geranyl diphosphate + diphosphate. The enzyme catalyses isopentenyl diphosphate + (2E)-geranyl diphosphate = (2E,6E)-farnesyl diphosphate + diphosphate. It carries out the reaction isopentenyl diphosphate + (2E,6E)-farnesyl diphosphate = (2E,6E,10E)-geranylgeranyl diphosphate + diphosphate. The protein operates within isoprenoid biosynthesis; farnesyl diphosphate biosynthesis; farnesyl diphosphate from geranyl diphosphate and isopentenyl diphosphate: step 1/1. Its pathway is isoprenoid biosynthesis; geranyl diphosphate biosynthesis; geranyl diphosphate from dimethylallyl diphosphate and isopentenyl diphosphate: step 1/1. It functions in the pathway isoprenoid biosynthesis; geranylgeranyl diphosphate biosynthesis; geranylgeranyl diphosphate from farnesyl diphosphate and isopentenyl diphosphate: step 1/1. Its function is as follows. Catalyzes the trans-addition of the three molecules of IPP onto DMAPP to form geranylgeranyl pyrophosphate, an important precursor of carotenoids and geranylated proteins. The protein is Geranylgeranyl pyrophosphate synthase (GGPS1) of Bos taurus (Bovine).